Reading from the N-terminus, the 219-residue chain is Transmembrane emp24 domain-containing protein 10 (219 aa).

The first 31 residues, 1-31 (MSGSSGPLSWPGPRPCALLFLLLLGPSSVLA), serve as a signal peptide directing secretion. A required for interaction with STX17 region spans residues 1–142 (MSGSSGPLSW…KNYEEIAKVE (142 aa)). Residues 32–185 (ISFHLPVNSR…RDTNESTNTR (154 aa)) are Lumenal-facing. One can recognise a GOLD domain in the interval 41–193 (RKCLREEIHK…TRVLYFSIFS (153 aa)). Positions 147 to 178 (LEVELRRLEDLSESIVNDFAYMKKREEEMRDT) are required for TMED10 and TMED2 cis-Golgi network localization. Arg-171 and Arg-176 each carry dimethylated arginine. N-linked (GlcNAc...) asparagine glycosylation occurs at Asn-179. Residues 186-206 (VLYFSIFSMLCLIGLATWQVF) form a helical membrane-spanning segment. An interaction with COPG1 region spans residues 204-219 (QVFYLRRFFKAKKLIE). Residues 207–219 (YLRRFFKAKKLIE) lie on the Cytoplasmic side of the membrane. Residues 207–219 (YLRRFFKAKKLIE) form an interaction with ARF1 and IL1B region. The COPII vesicle coat-binding signature appears at 211–212 (FF). The COPI vesicle coat-binding signature appears at 211-219 (FFKAKKLIE).

This sequence belongs to the EMP24/GP25L family. As to quaternary structure, predominantly dimeric and to a lesser extent monomeric in the ER. Monomer and dimer in ERGIC and cis-Golgi network. Forms homooligomer (via GOLD domain); the assembly is promoted by direct binding with leaderless cargos and may form a protein channel that facilitates cargo entry into the ERGIC. Forms heterooligomeric complexes with other members of the p24 family such as TMED2, TMED7 and TMED9. Interacts (via GOLD domain) with TMED2 (via GOLD domain); the complex is required for export of TMED10 from the ER to the cis-Golgi network; the complex is proposed to be involved in cis-Golgi network dynamics and / or biogenesis. Associates with the COPI vesicle coat subunits (coatomer). Tetramerization of the cytoplasmic domain at the Golgi membrane in vitro; the complex is proposed to interact with COPI coatomer and induce budding of the vesicles. Interacts with COPG1; the interaction involves TMED10 homodimer. Interacts with ARF1 (GDP-bound); the interaction probably involves a TMED10 oligomer. Interacts with SEC23A, SEC24B, SEC24C and SEC24D components of the coat protein complex II/COPII, indicative of an association of TMED10 with the COPII vesicle coat. Interacts with CD59. Interacts with MPPE1/PGAP5; the complex might recruit and sort GPI-anchored proteins to the ER-exit site, or the interaction might lead to recycling of PGAP5 between the ER and the Golgi. Interacts with F2LR1/PAR2. Interacts with KDELR2/ERD2; the interaction is disrupted by KDELR2 ligand. Found in a complex composed at least of SURF4, TMED2 and TMED10. Associates with the presenilin-dependent gamma-secretase complex. Interacts with STX17; the interaction is direct. Interacts with IL-1; the interaction is direct. Interacts with RAB21 (active GTP-bound form); the interaction is indirect and regulates TMED10 abundance and localization at the Golgi.

The protein localises to the endoplasmic reticulum membrane. It localises to the endoplasmic reticulum-Golgi intermediate compartment membrane. It is found in the golgi apparatus membrane. Its subcellular location is the golgi apparatus. The protein resides in the cis-Golgi network membrane. The protein localises to the trans-Golgi network membrane. It localises to the cytoplasmic vesicle. It is found in the secretory vesicle membrane. Its subcellular location is the cell membrane. The protein resides in the melanosome. In terms of biological role, cargo receptor involved in protein vesicular trafficking and quality control in the endoplasmic reticulum (ER) and Golgi. The p24 protein family is a group of transmembrane proteins that bind coat protein complex I/COPI and coat protein complex II/COPII involved in vesicular trafficking between the membranes. Acts at the lumenal side for incorporation of secretory cargo molecules into transport vesicles and involved in vesicle coat formation at the cytoplasmic side. Mainly functions in the early secretory pathway and cycles between the ER, ER-Golgi intermediate compartment (ERGIC) and Golgi, mediating cargo transport through COPI and COPII-coated vesicles. In COPII vesicle-mediated anterograde transport, involved in the transport of GPI-anchored proteins by acting together with TMED2 as their cargo receptor; the function specifically implies SEC24C and SEC24D of the COPII vesicle coat and lipid raft-like microdomains of the ER. Recognizes GPI anchors structural remodeled in the ER by the GPI inositol-deacylase/PGAP1 and the metallophosphoesterase MPPE1/PGAP5. In COPI vesicle-mediated retrograde transport, involved in the biogenesis of COPI vesicles and vesicle coat recruitment. Involved in trafficking of amyloid beta A4 protein and soluble APP-beta release (independent from the modulation of gamma-secretase activity). Involved in the KDELR2-mediated retrograde transport of the toxin A subunit (CTX-A-K63)together with COPI and the COOH terminus of KDELR2. On Golgi membranes, acts as a primary receptor for ARF1-GDP, a GTP-binding protein involved in COPI-vesicle formation. Increases coatomer-dependent GTPase-activating activity of ARFGAP2 which mediates the hydrolysis of ARF1-bound GTP and therefore modulates protein trafficking from the Golgi apparatus. Involved in the exocytic trafficking of G protein-coupled receptors F2LR1/PAR2 (trypsin and tryspin-like enzyme receptor), OPRM1 (opioid receptor) and P2RY4 (UTD and UDP receptor) from the Golgi to the plasma membrane, thus contributing to receptor resensitization. In addition to its cargo receptor activity, may also act as a protein channel after oligomerization, facilitating the post-translational entry of leaderless cytoplasmic cargo into the ERGIC. Involved in the translocation into ERGIC, the vesicle entry and the secretion of leaderless cargos (lacking the secretion signal sequence), including the mature form of interleukin 1/IL-1 family members, the alpha-crystallin B chain HSPB5, the carbohydrate-binding proteins galectin-1/LGALS1 and galectin-3/LGALS3, the microtubule-associated protein Tau/MAPT, and the annexin A1/ANXA1; the translocation process is dependent on cargo protein unfolding and enhanced by chaperones HSP90AB1 and HSP90B1/GRP9. Could also associates with the presenilin-dependent gamma-secretase complex in order to regulate gamma-cleavages of the amyloid beta A4 protein to yield amyloid-beta 40/Abeta40. The sequence is that of Transmembrane emp24 domain-containing protein 10 (TMED10) from Mesocricetus auratus (Golden hamster).